The sequence spans 424 residues: 3-phosphoshikimate 1-carboxyvinyltransferase (424 aa).

Residues K21, S22, and R26 each contribute to the 3-phosphoshikimate site. Residue K21 participates in phosphoenolpyruvate binding. Positions 92 and 120 each coordinate phosphoenolpyruvate. Positions 163, 164, 165, 191, 306, and 333 each coordinate 3-phosphoshikimate. Residue Q165 participates in phosphoenolpyruvate binding. The active-site Proton acceptor is D306. R337, R379, and K405 together coordinate phosphoenolpyruvate.

The protein belongs to the EPSP synthase family. In terms of assembly, monomer.

Its subcellular location is the cytoplasm. It catalyses the reaction 3-phosphoshikimate + phosphoenolpyruvate = 5-O-(1-carboxyvinyl)-3-phosphoshikimate + phosphate. Its pathway is metabolic intermediate biosynthesis; chorismate biosynthesis; chorismate from D-erythrose 4-phosphate and phosphoenolpyruvate: step 6/7. Functionally, catalyzes the transfer of the enolpyruvyl moiety of phosphoenolpyruvate (PEP) to the 5-hydroxyl of shikimate-3-phosphate (S3P) to produce enolpyruvyl shikimate-3-phosphate and inorganic phosphate. The chain is 3-phosphoshikimate 1-carboxyvinyltransferase from Clostridium perfringens (strain SM101 / Type A).